Here is a 395-residue protein sequence, read N- to C-terminus: MKKVVVGLSGGVDSSVSAYLLKEQGYEVIGLFMKNWHDDSVTISDECPWLDDSNDAMMVADKLGIPFQTVDLSEQYKERIVDYMFNEYEKGRTPNPDVLCNREIKFDVFMKIALSLGADYVATGHYCRKAEFEKDGEPIYQLLSGEDNNKDQSYFLCQLTQEQLSKTLFPIGELQKSEVRKIAAEQNLVTAEKKDSQGLCFIGKVRLPDFLQQKLKSKEGVIVEVPAGNDSYLEEDINFKSKIDQLQHLSKKFNYQLTDGKVVGKHQGAHYFTKGQRKGLAVGGTPEPLFVIDTDVIENVIYTGQGKDHPGIYRQGLFIAQDEVHWVRRDLAIDSDEELRIKARIRYRQPLQDATLHQTENGMYVIFDQPQASITEGQFVAWYQNGELLGSGVIS.

ATP-binding positions include 7–14 and Met33; that span reads GLSGGVDS. An interaction with target base in tRNA region spans residues 95 to 97; that stretch reads NPD. Residue Cys100 is the Nucleophile of the active site. An intrachain disulfide couples Cys100 to Cys200. Gly124 lines the ATP pocket. The interaction with tRNA stretch occupies residues 150-152; that stretch reads KDQ. Cys200 serves as the catalytic Cysteine persulfide intermediate. The interaction with tRNA stretch occupies residues 346–347; that stretch reads RY.

The protein belongs to the MnmA/TRMU family.

It is found in the cytoplasm. The catalysed reaction is S-sulfanyl-L-cysteinyl-[protein] + uridine(34) in tRNA + AH2 + ATP = 2-thiouridine(34) in tRNA + L-cysteinyl-[protein] + A + AMP + diphosphate + H(+). Catalyzes the 2-thiolation of uridine at the wobble position (U34) of tRNA, leading to the formation of s(2)U34. The polypeptide is tRNA-specific 2-thiouridylase MnmA (Christiangramia forsetii (strain DSM 17595 / CGMCC 1.15422 / KT0803) (Gramella forsetii)).